Reading from the N-terminus, the 392-residue chain is Putative transactivator/viroplasmin protein (392 aa).

Positions 1 to 88 (MEDMMKQILE…NVEEQYQWKN (88 aa)) form a coiled coil. The disordered stretch occupies residues 358 to 392 (EIEKEEPGEEKNLEDVSTDDNNEKKKIRSVIVKET).

The protein belongs to the caulimoviridae viroplasmin family.

The protein localises to the host cytoplasm. In terms of biological role, enhances the translation of downstream ORFs on polycistronic mRNAs derived from cassava vein mosaic virus. This is Putative transactivator/viroplasmin protein from Cassava vein mosaic virus (CsVMV).